A 798-amino-acid chain; its full sequence is Serine/threonine-protein kinase SIK2 (798 aa).

The Protein kinase domain occupies 26-277 (YDIERTLGKG…ISQIKQHKWM (252 aa)). ATP-binding positions include 32–40 (LGKGNFAVV) and K55. D148 functions as the Proton acceptor in the catalytic mechanism. At T181 the chain carries Phosphothreonine. Position 185 is a phosphoserine (S185). Positions 302–342 (DYNEQVLGIMQTLGIDRQRTVESLQNSSYNHFAAIYYLLLE) constitute a UBA domain. Positions 351–361 (QLSSRPATGRQ) are enriched in polar residues. The disordered stretch occupies residues 351-382 (QLSSRPATGRQQRPRSSEISNAEMPQDSLTSE). S575 is subject to Phosphoserine. A disordered region spans residues 672–691 (ACPQTSQTSATNGLPPSDSA). Over residues 673-685 (CPQTSQTSATNGL) the composition is skewed to polar residues.

The protein belongs to the protein kinase superfamily. CAMK Ser/Thr protein kinase family. SNF1 subfamily. It depends on Mg(2+) as a cofactor. Post-translationally, phosphorylated at Thr-181 by STK11/LKB1 in complex with STE20-related adapter-alpha (STRADA) pseudo kinase and CAB39. In terms of tissue distribution, ubiquitously expressed in embryonic tissue.

The protein resides in the cytoplasm. It carries out the reaction L-seryl-[protein] + ATP = O-phospho-L-seryl-[protein] + ADP + H(+). The enzyme catalyses L-threonyl-[protein] + ATP = O-phospho-L-threonyl-[protein] + ADP + H(+). Its activity is regulated as follows. Activated by phosphorylation on Thr-181. Functionally, phosphorylates IRS1 in insulin-stimulated adipocytes, potentially modulating the efficiency of insulin signal transduction. Inhibits CREB activity by phosphorylating and repressing the CREB-specific coactivators, CRTC1-3. This is Serine/threonine-protein kinase SIK2 (SIK2) from Gallus gallus (Chicken).